The chain runs to 363 residues: Dihydroorotate dehydrogenase (quinone) (363 aa).

Residues 77–81 (AGMDK) and T101 each bind FMN. A substrate-binding site is contributed by K81. 126–130 (NRMGF) contacts substrate. Residues S155 and N188 each coordinate FMN. Substrate is bound at residue N188. S191 serves as the catalytic Nucleophile. N193 is a substrate binding site. 2 residues coordinate FMN: K234 and T262. 263 to 264 (NT) contributes to the substrate binding site. FMN contacts are provided by residues G287, G316, and 337-338 (YT).

This sequence belongs to the dihydroorotate dehydrogenase family. Type 2 subfamily. As to quaternary structure, monomer. It depends on FMN as a cofactor.

Its subcellular location is the cell membrane. The catalysed reaction is (S)-dihydroorotate + a quinone = orotate + a quinol. The protein operates within pyrimidine metabolism; UMP biosynthesis via de novo pathway; orotate from (S)-dihydroorotate (quinone route): step 1/1. Functionally, catalyzes the conversion of dihydroorotate to orotate with quinone as electron acceptor. This chain is Dihydroorotate dehydrogenase (quinone), found in Chloroflexus aurantiacus (strain ATCC 29366 / DSM 635 / J-10-fl).